Here is a 726-residue protein sequence, read N- to C-terminus: Beta-glucosidase cel3A (726 aa).

The N-terminal stretch at methionine 1–alanine 20 is a signal peptide. 2 N-linked (GlcNAc...) asparagine glycosylation sites follow: asparagine 223 and asparagine 592.

Belongs to the glycosyl hydrolase 3 family.

The protein resides in the secreted. The catalysed reaction is Hydrolysis of terminal, non-reducing beta-D-glucosyl residues with release of beta-D-glucose.. The protein operates within glycan metabolism; cellulose degradation. Functionally, beta-glucosidases are one of a number of cellulolytic enzymes involved in the degradation of cellulosic biomass. Catalyzes the last step releasing glucose from the inhibitory cellobiose. Has a broad substrate specificity but preferentially hydrolyzes highly polymerized 1,3- and 1,4-beta-glucans. This chain is Beta-glucosidase cel3A, found in Pyricularia oryzae (strain 70-15 / ATCC MYA-4617 / FGSC 8958) (Rice blast fungus).